Consider the following 508-residue polypeptide: Photosystem II CP47 reaction center protein (508 aa).

6 consecutive transmembrane segments (helical) span residues 21–36, 101–115, 140–156, 203–218, 237–252, and 457–472; these read SVHIMHTALVSGWAGS, IVFSGLCFLASIWHW, GIHLFLSGVACFGFGAF, IAAGTLGILAGLFHLS, VLSSSIAAVFFAAFIV, and SFALLFFFGHIWHGAR.

The protein belongs to the PsbB/PsbC family. PsbB subfamily. PSII is composed of 1 copy each of membrane proteins PsbA, PsbB, PsbC, PsbD, PsbE, PsbF, PsbH, PsbI, PsbJ, PsbK, PsbL, PsbM, PsbT, PsbX, PsbY, PsbZ, Psb30/Ycf12, at least 3 peripheral proteins of the oxygen-evolving complex and a large number of cofactors. It forms dimeric complexes. The cofactor is Binds multiple chlorophylls. PSII binds additional chlorophylls, carotenoids and specific lipids..

The protein localises to the plastid. It localises to the chloroplast thylakoid membrane. In terms of biological role, one of the components of the core complex of photosystem II (PSII). It binds chlorophyll and helps catalyze the primary light-induced photochemical processes of PSII. PSII is a light-driven water:plastoquinone oxidoreductase, using light energy to abstract electrons from H(2)O, generating O(2) and a proton gradient subsequently used for ATP formation. The polypeptide is Photosystem II CP47 reaction center protein (Amborella trichopoda).